The following is a 319-amino-acid chain: ADP-ribosyl cyclase/cyclic ADP-ribose hydrolase 2 (319 aa).

The N-terminal stretch at 1-33 is a signal peptide; that stretch reads MAVQACALSLRLGLWMSLLLPVLPGAGARAAGA. Intrachain disulfides connect Cys52-Cys68, Cys84-Cys164, and Cys145-Cys158. N-linked (GlcNAc...) asparagine glycosylation is found at Asn67 and Asn96. Trp110 is a binding site for NAD(+). Trp110 contributes to the nicotinamide binding site. N-linked (GlcNAc...) asparagine glycosylation occurs at Asn149. NAD(+) is bound at residue Trp173. Asn193 carries N-linked (GlcNAc...) asparagine glycosylation. Residue Glu211 coordinates NAD(+). 2 disulfide bridges follow: Cys239–Cys260 and Cys272–Cys281. Ser294 carries GPI-anchor amidated serine lipidation. A propeptide spanning residues 295–319 is cleaved from the precursor; that stretch reads PALHAIGDISLIISLLVALASSSQA.

Belongs to the ADP-ribosyl cyclase family. Homodimer. Pancreatic islets, kidney, spleen, heart, thymus, intestine and salivary gland.

The protein localises to the cell membrane. The catalysed reaction is NAD(+) + H2O = ADP-D-ribose + nicotinamide + H(+). The enzyme catalyses NAD(+) = cyclic ADP-beta-D-ribose + nicotinamide + H(+). It catalyses the reaction cyclic ADP-beta-D-ribose + H2O = ADP-D-ribose. Its function is as follows. Catalyzes both the synthesis of cyclic ADP-beta-D-ribose (cADPR) from NAD(+), and its hydrolysis to ADP-D-ribose (ADPR). Cyclic ADPR is known to serve as an endogenous second messenger that elicits calcium release from intracellular stores, and thus regulates the mobilization of intracellular calcium. May be involved in pre-B-cell growth. The chain is ADP-ribosyl cyclase/cyclic ADP-ribose hydrolase 2 (Bst1) from Rattus norvegicus (Rat).